Here is a 257-residue protein sequence, read N- to C-terminus: MLAKRIVPCLDVKDGCVVKGVQFRNHEIVGDIVPLAARYAAEGADELVFYDITASAHDRVVDKSWVSRVAEQIDIPFCVAGGIKTIGQARELLAFGADKISVNSPALSDPSLISRLQDEFGRQCIVIGIDSFYDAASDSYKVKQFTGDEAATKETAWYTQDWVEEVQKRGCGEIVLNVMNQDGVRGGYDIKQLSLVRQLCDVPLIASGGAGTMTHFRDVFIEAKVDAALAASVFHKAIINIGELKQYLAAEGIAIRQ.

Residues aspartate 11 and aspartate 130 contribute to the active site.

This sequence belongs to the HisA/HisF family. As to quaternary structure, heterodimer of HisH and HisF.

Its subcellular location is the cytoplasm. It carries out the reaction 5-[(5-phospho-1-deoxy-D-ribulos-1-ylimino)methylamino]-1-(5-phospho-beta-D-ribosyl)imidazole-4-carboxamide + L-glutamine = D-erythro-1-(imidazol-4-yl)glycerol 3-phosphate + 5-amino-1-(5-phospho-beta-D-ribosyl)imidazole-4-carboxamide + L-glutamate + H(+). It functions in the pathway amino-acid biosynthesis; L-histidine biosynthesis; L-histidine from 5-phospho-alpha-D-ribose 1-diphosphate: step 5/9. IGPS catalyzes the conversion of PRFAR and glutamine to IGP, AICAR and glutamate. The HisF subunit catalyzes the cyclization activity that produces IGP and AICAR from PRFAR using the ammonia provided by the HisH subunit. This is Imidazole glycerol phosphate synthase subunit HisF from Shewanella sp. (strain ANA-3).